The following is a 385-amino-acid chain: Flap endonuclease 1 (385 aa).

Residues 1 to 104 form an N-domain region; it reads MGILGLSKLI…GELAKRAERR (104 aa). Aspartate 34 contributes to the Mg(2+) binding site. Arginine 47 and arginine 70 together coordinate DNA. Aspartate 86, glutamate 158, glutamate 160, aspartate 179, and aspartate 181 together coordinate Mg(2+). Residues 122–253 form an I-domain region; the sequence is GIEKFNRRLV…KRAIELINTY (132 aa). DNA is bound at residue glutamate 158. Positions 231 and 233 each coordinate DNA. Aspartate 233 is a binding site for Mg(2+). The tract at residues 336–344 is interaction with PCNA; it reads TQVRLDSFF. Residues 346–385 form a disordered region; that stretch reads TLPSTPNATNAAKRKAEEAKKSANNKKAKTSGGGRGRRPK. Over residues 368 to 385 the composition is skewed to basic residues; sequence ANNKKAKTSGGGRGRRPK.

It belongs to the XPG/RAD2 endonuclease family. FEN1 subfamily. In terms of assembly, interacts with PCNA. Three molecules of FEN1 bind to one PCNA trimer with each molecule binding to one PCNA monomer. PCNA stimulates the nuclease activity without altering cleavage specificity. It depends on Mg(2+) as a cofactor. Phosphorylated. Phosphorylation upon DNA damage induces relocalization to the nuclear plasma.

The protein localises to the nucleus. It localises to the nucleolus. Its subcellular location is the nucleoplasm. The protein resides in the mitochondrion. Its function is as follows. Structure-specific nuclease with 5'-flap endonuclease and 5'-3' exonuclease activities involved in DNA replication and repair. During DNA replication, cleaves the 5'-overhanging flap structure that is generated by displacement synthesis when DNA polymerase encounters the 5'-end of a downstream Okazaki fragment. It enters the flap from the 5'-end and then tracks to cleave the flap base, leaving a nick for ligation. Also involved in the long patch base excision repair (LP-BER) pathway, by cleaving within the apurinic/apyrimidinic (AP) site-terminated flap. Acts as a genome stabilization factor that prevents flaps from equilibrating into structures that lead to duplications and deletions. Also possesses 5'-3' exonuclease activity on nicked or gapped double-stranded DNA, and exhibits RNase H activity. Also involved in replication and repair of rDNA and in repairing mitochondrial DNA. The sequence is that of Flap endonuclease 1 from Drosophila simulans (Fruit fly).